Consider the following 198-residue polypeptide: Protein XA-1 (198 aa).

The N-terminal stretch at 1–18 (MFFYVLLLALMAQGWSLP) is a signal peptide. The tract at residues 17–198 (LPQGKTGEDS…KHGQEQGKKH (182 aa)) is disordered. Residues 29–44 (FRPPSPPMGPSLPPPV) are compositionally biased toward pro residues. Over residues 46-59 (HDLHRPSGHPEEFR) the composition is skewed to basic and acidic residues. Basic residues predominate over residues 76–86 (GRPKRDLHHGK). A compositionally biased stretch (basic and acidic residues) spans 95 to 104 (HTGEVLHHTD). Residues 134 to 145 (HGRHRRDLHHGK) show a composition bias toward basic residues. The span at 181–198 (NSSEEKRPKHGQEQGKKH) shows a compositional bias: basic and acidic residues.

As to expression, expressed in the periphery of the cement gland as well as in the region of the hatching gland.

Its subcellular location is the secreted. This Xenopus laevis (African clawed frog) protein is Protein XA-1.